Consider the following 211-residue polypeptide: Ribonuclease HII (211 aa).

Residues 16–205 form the RNase H type-2 domain; the sequence is APVCGVDEAG…VKAALAAAAV (190 aa). Residues Asp-22, Glu-23, and Asp-114 each contribute to the a divalent metal cation site.

The protein belongs to the RNase HII family. Mn(2+) is required as a cofactor. Mg(2+) serves as cofactor.

It is found in the cytoplasm. It catalyses the reaction Endonucleolytic cleavage to 5'-phosphomonoester.. Endonuclease that specifically degrades the RNA of RNA-DNA hybrids. This Caulobacter vibrioides (strain ATCC 19089 / CIP 103742 / CB 15) (Caulobacter crescentus) protein is Ribonuclease HII (rnhB).